The following is a 166-amino-acid chain: Urease accessory protein UreE (166 aa).

Belongs to the UreE family.

It localises to the cytoplasm. Its function is as follows. Involved in urease metallocenter assembly. Binds nickel. Probably functions as a nickel donor during metallocenter assembly. This chain is Urease accessory protein UreE, found in Pseudomonas fluorescens (strain Pf0-1).